The sequence spans 382 residues: Mannitol-1-phosphate 5-dehydrogenase (382 aa).

3-14 contributes to the NAD(+) binding site; sequence ALHFGAGNIGRG. At lysine 269 the chain carries N6-acetyllysine.

This sequence belongs to the mannitol dehydrogenase family.

The enzyme catalyses D-mannitol 1-phosphate + NAD(+) = beta-D-fructose 6-phosphate + NADH + H(+). The protein is Mannitol-1-phosphate 5-dehydrogenase of Escherichia coli O81 (strain ED1a).